Here is a 266-residue protein sequence, read N- to C-terminus: Inositol-1-monophosphatase (266 aa).

Residues E69, D86, L88, and D89 each contribute to the Mg(2+) site. Residue E69 participates in substrate binding. Residues 88-91 (LDGT), R185, and D214 contribute to the substrate site. Residue D214 coordinates Mg(2+).

This sequence belongs to the inositol monophosphatase superfamily. It depends on Mg(2+) as a cofactor.

It carries out the reaction a myo-inositol phosphate + H2O = myo-inositol + phosphate. The sequence is that of Inositol-1-monophosphatase (suhB) from Rhizobium meliloti (strain 1021) (Ensifer meliloti).